A 408-amino-acid polypeptide reads, in one-letter code: tRNA-specific 2-thiouridylase MnmA (408 aa).

ATP contacts are provided by residues 27-34 and Leu53; that span reads AMSGGVDS. Cys121 functions as the Nucleophile in the catalytic mechanism. A disulfide bond links Cys121 and Cys222. Gly145 contacts ATP. Residues 172–174 are interaction with tRNA; it reads RDQ. The active-site Cysteine persulfide intermediate is Cys222.

It belongs to the MnmA/TRMU family.

The protein localises to the cytoplasm. The catalysed reaction is S-sulfanyl-L-cysteinyl-[protein] + uridine(34) in tRNA + AH2 + ATP = 2-thiouridine(34) in tRNA + L-cysteinyl-[protein] + A + AMP + diphosphate + H(+). In terms of biological role, catalyzes the 2-thiolation of uridine at the wobble position (U34) of tRNA, leading to the formation of s(2)U34. The protein is tRNA-specific 2-thiouridylase MnmA of Rhizobium etli (strain ATCC 51251 / DSM 11541 / JCM 21823 / NBRC 15573 / CFN 42).